Here is a 978-residue protein sequence, read N- to C-terminus: Monofunctional C1-tetrahydrofolate synthase, mitochondrial (978 aa).

Residues 1–10 (MGTRLPLVLR) are compositionally biased toward low complexity. The N-terminal 31 residues, 1-31 (MGTRLPLVLRQLRRPPQPPGPPRRLRVPCRA), are a transit peptide targeting the mitochondrion. The disordered stretch occupies residues 1-71 (MGTRLPLVLR…SPGGRTPAAR (71 aa)). Residues 31–348 (ASSGGGGGGG…REQQHRRWRL (318 aa)) form a methylenetetrahydrofolate dehydrogenase and cyclohydrolase region. A compositionally biased stretch (gly residues) spans 33-45 (SGGGGGGGGGREG). Residue lysine 189 is modified to N6-acetyllysine; alternate. At lysine 189 the chain carries N6-succinyllysine; alternate. The segment at 349 to 978 (HCLKLQPLSP…TETEQVKGLF (630 aa)) is formyltetrahydrofolate synthetase. Position 357 is a phosphoserine (serine 357). 423-430 (TPLGEGKS) lines the ATP pocket. An N6-succinyllysine modification is found at lysine 596.

It in the N-terminal section; belongs to the tetrahydrofolate dehydrogenase/cyclohydrolase family. The protein in the C-terminal section; belongs to the formate--tetrahydrofolate ligase family. Homodimer. Detected in most tissues, highest expression found in placenta, thymus and brain. Low expression is found in liver and skeletal muscle. Up-regulated in colon adenocarcinoma.

It localises to the mitochondrion. It carries out the reaction (6S)-5,6,7,8-tetrahydrofolate + formate + ATP = (6R)-10-formyltetrahydrofolate + ADP + phosphate. It functions in the pathway one-carbon metabolism; tetrahydrofolate interconversion. May provide the missing metabolic reaction required to link the mitochondria and the cytoplasm in the mammalian model of one-carbon folate metabolism complementing thus the enzymatic activities of MTHFD2. The chain is Monofunctional C1-tetrahydrofolate synthase, mitochondrial from Homo sapiens (Human).